The following is a 681-amino-acid chain: DNA ligase (681 aa).

NAD(+) is bound by residues 45–49 (DFDFD), 94–95 (SL), and Glu-120. Residue Lys-122 is the N6-AMP-lysine intermediate of the active site. 4 residues coordinate NAD(+): Arg-143, Glu-177, Lys-289, and Lys-313. Cys-403, Cys-406, Cys-421, and Cys-426 together coordinate Zn(2+). The region spanning 593 to 681 (SDQQPFAGQS…SLKINFKNTI (89 aa)) is the BRCT domain.

The protein belongs to the NAD-dependent DNA ligase family. LigA subfamily. Requires Mg(2+) as cofactor. Mn(2+) is required as a cofactor.

The catalysed reaction is NAD(+) + (deoxyribonucleotide)n-3'-hydroxyl + 5'-phospho-(deoxyribonucleotide)m = (deoxyribonucleotide)n+m + AMP + beta-nicotinamide D-nucleotide.. DNA ligase that catalyzes the formation of phosphodiester linkages between 5'-phosphoryl and 3'-hydroxyl groups in double-stranded DNA using NAD as a coenzyme and as the energy source for the reaction. It is essential for DNA replication and repair of damaged DNA. This chain is DNA ligase, found in Leptospira borgpetersenii serovar Hardjo-bovis (strain JB197).